A 757-amino-acid chain; its full sequence is Relaxin receptor 1 (757 aa).

Residues 1–408 (MTSGSVFFYI…LENLLASIIQ (408 aa)) are Extracellular-facing. An LDL-receptor class A domain is found at 26–63 (KCSLGYFPCGNITKCLPQLLHCNGVDDCGNQADEDNCG). Intrachain disulfides connect cysteine 27-cysteine 40, cysteine 34-cysteine 53, and cysteine 47-cysteine 62. An N-linked (GlcNAc...) asparagine glycan is attached at asparagine 36. Leucine 45, asparagine 48, valine 50, aspartate 52, aspartate 58, and glutamate 59 together coordinate Ca(2+). Residues 91 to 127 (ETPECLVGSVPVQCLCRGLELDCDETNLRAVPSVSSN) form the LRRNT domain. Asparagine 127 is a glycosylation site (N-linked (GlcNAc...) asparagine). LRR repeat units lie at residues 151 to 172 (DLQKLYLQNNKITSISIYAFRG), 175 to 196 (SLTKLYLSHNRITFLKPGVFED), 199 to 220 (RLEWLIIEDNHLSRISPPTFYG), 223 to 244 (SLILLVLMNNVLTRLPDKPLCQ), 248 to 269 (RLHWLDLEGNHIHNLRNLTLIS), 272 to 293 (NLTVLVMGKNKINHLNENTFAP), 296 to 317 (KLDELDLGSNKIENLPPLIFKD), 320 to 341 (ELSQLNLSYNPIQKIQANQFDY), and 344 to 365 (KLKSLSLEGIEISNIQQRMFRP). N-linked (GlcNAc...) asparagine glycosylation is found at asparagine 264 and asparagine 272. Asparagine 325 is a glycosylation site (N-linked (GlcNAc...) asparagine). Asparagine 368 carries N-linked (GlcNAc...) asparagine glycosylation. The chain crosses the membrane as a helical span at residues 409 to 429 (RVFVWVVSAVTCFGNVFVICM). Residues 430–443 (RPYIRSENKLYAMS) are Cytoplasmic-facing. A helical membrane pass occupies residues 444 to 464 (IISLCCADCLMGIYLFVIGGF). The Extracellular segment spans residues 465 to 486 (DLKFRGEYNKHAQLWMESTHCQ). Cysteine 485 and cysteine 563 are joined by a disulfide. The helical transmembrane segment at 487 to 507 (LVGSLAILSTEVSVLLLTFLT) threads the bilayer. Residues 508 to 527 (LEKYICIVYPFRCVRPGKCR) are Cytoplasmic-facing. The chain crosses the membrane as a helical span at residues 528-548 (TITVLILIWITGFIVAFIPLS). Topologically, residues 549–577 (NKEFFKNYYGTNGVCFPLHSEDTESIGAQ) are extracellular. Residues 578–598 (VYSVAIFLGINLAAFIIIVFS) traverse the membrane as a helical segment. Residues 599-629 (YGSMFYSVHQSAITATEIRNQVKKEMILAKR) lie on the Cytoplasmic side of the membrane. The chain crosses the membrane as a helical span at residues 630 to 650 (FFFIVFTDALCWIPIFVVKFL). Residues 651–660 (SLLQVEIPGT) lie on the Extracellular side of the membrane. The helical transmembrane segment at 661-681 (ITSWVVIFILPINSALNPILY) threads the bilayer. Residues 682 to 757 (TLTTRPFKEM…SQSTRLNSYS (76 aa)) are Cytoplasmic-facing.

It belongs to the G-protein coupled receptor 1 family. As to quaternary structure, interacts with C1QTNF8.

The protein localises to the cell membrane. In terms of biological role, receptor for relaxins. The activity of this receptor is mediated by G proteins leading to stimulation of adenylate cyclase and an increase of cAMP. Binding of the ligand may also activate a tyrosine kinase pathway that inhibits the activity of a phosphodiesterase that degrades cAMP. This chain is Relaxin receptor 1 (RXFP1), found in Pongo abelii (Sumatran orangutan).